A 373-amino-acid chain; its full sequence is 3 beta-hydroxysteroid dehydrogenase/Delta 5--&gt;4-isomerase type 4 (373 aa).

Y155 acts as the Proton acceptor in catalysis. Residue K159 participates in NAD(+) binding. The helical transmembrane segment at 288-308 (LPLLYWLAFLLEIVSFFLHPV) threads the bilayer. K350 bears the N6-acetyllysine mark.

This sequence belongs to the 3-beta-HSD family. As to expression, skin, placenta, also detectable in ovary and adrenal gland.

The protein resides in the endoplasmic reticulum membrane. It localises to the mitochondrion membrane. The enzyme catalyses a 3beta-hydroxy-Delta(5)-steroid + NAD(+) = a 3-oxo-Delta(5)-steroid + NADH + H(+). The catalysed reaction is a 3-oxo-Delta(5)-steroid = a 3-oxo-Delta(4)-steroid. Its pathway is lipid metabolism; steroid biosynthesis. Its function is as follows. 3-beta-HSD is a bifunctional enzyme, that catalyzes the oxidative conversion of Delta(5)-ene-3-beta-hydroxy steroid, and the oxidative conversion of ketosteroids. The 3-beta-HSD enzymatic system plays a crucial role in the biosynthesis of all classes of hormonal steroids. This is 3 beta-hydroxysteroid dehydrogenase/Delta 5--&gt;4-isomerase type 4 (Hsd3b6) from Rattus norvegicus (Rat).